A 308-amino-acid polypeptide reads, in one-letter code: ADP,ATP carrier protein (308 aa).

3 Solcar repeats span residues 6 to 99 (KNFM…FKRM), 110 to 203 (KWFA…LKPV), and 211 to 297 (NNFL…LQVI). The next 5 membrane-spanning stretches (helical) occupy residues 8–35 (FMVDFLAGGLSAAVSKTAAAPIERVKLL), 76–100 (TANVIRYFPTQALNFAFKDKFKRMF), 108–128 (YWKWFAGNMASGGAAGAVSLS), 179–200 (FNISCVGIVVYRGLYFGMYDSL), and 214–234 (LAAFLLGWGITIGAGLASYPI). The ADP site is built by Arg81 and Lys93. Arg238 lines the ADP pocket. The interval 238-243 (RRRMMM) is important for transport activity. A Nucleotide carrier signature motif motif is present at residues 238-243 (RRRMMM). The helical transmembrane segment at 274 to 294 (AGANILRAVAGAGVLAGYDQL) threads the bilayer.

It belongs to the mitochondrial carrier (TC 2.A.29) family. As to quaternary structure, monomer.

It localises to the mitochondrion inner membrane. It catalyses the reaction ADP(in) + ATP(out) = ADP(out) + ATP(in). With respect to regulation, the matrix-open state (m-state) is inhibited by the membrane-permeable bongkrekic acid (BKA). The cytoplasmic-open state (c-state) is inhibited by the membrane-impermeable toxic inhibitor carboxyatractyloside (CATR). Its function is as follows. ADP:ATP antiporter that mediates import of ADP into the mitochondrial matrix for ATP synthesis, and export of ATP out to fuel the cell. Cycles between the cytoplasmic-open state (c-state) and the matrix-open state (m-state): operates by the alternating access mechanism with a single substrate-binding site intermittently exposed to either the cytosolic (c-state) or matrix (m-state) side of the inner mitochondrial membrane. The chain is ADP,ATP carrier protein (ABT) from Chlamydomonas reinhardtii (Chlamydomonas smithii).